The primary structure comprises 250 residues: Eukaryotic translation initiation factor 2 subunit 2 (250 aa).

Residues 193-217 form a C4-type zinc finger; sequence CHTCKSPETQLTKDTRLFFLQCTNC.

This sequence belongs to the eIF-2-beta/eIF-5 family. In terms of assembly, eukaryotic translation initiation factor 2 eIF2 is a heterotrimeric complex composed of an alpha, a beta and a gamma subunit.

Its subcellular location is the cytoplasm. The protein localises to the cytosol. Its function is as follows. Component of the eIF2 complex that functions in the early steps of protein synthesis by forming a ternary complex with GTP and initiator tRNA. This complex binds to a 40S ribosomal subunit, followed by mRNA binding to form a 43S pre-initiation complex (43S PIC). Junction of the 60S ribosomal subunit to form the 80S initiation complex is preceded by hydrolysis of the GTP bound to eIF2 and release of an eIF2-GDP binary complex. In order for eIF2 to recycle and catalyze another round of initiation, the GDP bound to eIF2 must exchange with GTP by way of a reaction catalyzed by eIF2B. The protein is Eukaryotic translation initiation factor 2 subunit 2 of Caenorhabditis elegans.